The chain runs to 1018 residues: Integrator complex subunit 5 (1018 aa).

The disordered stretch occupies residues Met-1–Leu-26. Ser-2 is modified (N-acetylserine). A compositionally biased stretch (pro residues) spans Pro-8–Ala-17. Ser-278 carries the post-translational modification Phosphoserine. 3 consecutive transmembrane segments (helical) span residues Leu-533–Phe-553, Leu-855–Val-875, and Val-929–Leu-949.

It belongs to the Integrator subunit 5 family. In terms of assembly, component of the Integrator complex, composed of core subunits INTS1, INTS2, INTS3, INTS4, INTS5, INTS6, INTS7, INTS8, INTS9/RC74, INTS10, INTS11/CPSF3L, INTS12, INTS13, INTS14 and INTS15. The core complex associates with protein phosphatase 2A subunits PPP2CA and PPP2R1A, to form the Integrator-PP2A (INTAC) complex.

It is found in the nucleus. The protein resides in the cytoplasm. It localises to the nucleus membrane. In terms of biological role, component of the integrator complex, a multiprotein complex that terminates RNA polymerase II (Pol II) transcription in the promoter-proximal region of genes. The integrator complex provides a quality checkpoint during transcription elongation by driving premature transcription termination of transcripts that are unfavorably configured for transcriptional elongation: the complex terminates transcription by (1) catalyzing dephosphorylation of the C-terminal domain (CTD) of Pol II subunit POLR2A/RPB1 and SUPT5H/SPT5, (2) degrading the exiting nascent RNA transcript via endonuclease activity and (3) promoting the release of Pol II from bound DNA. The integrator complex is also involved in terminating the synthesis of non-coding Pol II transcripts, such as enhancer RNAs (eRNAs), small nuclear RNAs (snRNAs), telomerase RNAs and long non-coding RNAs (lncRNAs). Mediates recruitment of cytoplasmic dynein to the nuclear envelope, probably as component of the integrator complex. The sequence is that of Integrator complex subunit 5 (Ints5) from Mus musculus (Mouse).